A 345-amino-acid polypeptide reads, in one-letter code: Hydroxymethylglutaryl-CoA synthase (345 aa).

A (3S)-3-hydroxy-3-methylglutaryl-CoA-binding site is contributed by D28. E80 (proton donor/acceptor) is an active-site residue. Residues C112 and T153 each coordinate (3S)-3-hydroxy-3-methylglutaryl-CoA. C112 acts as the Acyl-thioester intermediate in catalysis. Position 199 (R199) interacts with CoA. (3S)-3-hydroxy-3-methylglutaryl-CoA contacts are provided by T201 and H234. The active-site Proton donor/acceptor is the H234. K239 is a CoA binding site. Residues R243, N266, and S296 each contribute to the (3S)-3-hydroxy-3-methylglutaryl-CoA site.

This sequence belongs to the thiolase-like superfamily. Archaeal HMG-CoA synthase family. Interacts with acetoacetyl-CoA thiolase that catalyzes the precedent step in the pathway and with a DUF35 protein. The acetoacetyl-CoA thiolase/HMG-CoA synthase complex channels the intermediate via a fused CoA-binding site, which allows for efficient coupling of the endergonic thiolase reaction with the exergonic HMGCS reaction.

It carries out the reaction acetoacetyl-CoA + acetyl-CoA + H2O = (3S)-3-hydroxy-3-methylglutaryl-CoA + CoA + H(+). The protein operates within metabolic intermediate biosynthesis; (R)-mevalonate biosynthesis; (R)-mevalonate from acetyl-CoA: step 2/3. Catalyzes the condensation of acetyl-CoA with acetoacetyl-CoA to form 3-hydroxy-3-methylglutaryl-CoA (HMG-CoA). Functions in the mevalonate (MVA) pathway leading to isopentenyl diphosphate (IPP), a key precursor for the biosynthesis of isoprenoid compounds that are building blocks of archaeal membrane lipids. This chain is Hydroxymethylglutaryl-CoA synthase, found in Methanocaldococcus jannaschii (strain ATCC 43067 / DSM 2661 / JAL-1 / JCM 10045 / NBRC 100440) (Methanococcus jannaschii).